We begin with the raw amino-acid sequence, 86 residues long: Toxin CngtIV (86 aa).

A signal peptide spans 1–19; that stretch reads MNSLLIITACLVLIGTVWA. An LCN-type CS-alpha/beta domain is found at 20 to 84; that stretch reads KDGYLVDVKG…TWPLPNKRCG (65 aa). Disulfide bonds link C30–C83, C34–C59, C43–C64, and C47–C66.

It belongs to the long (4 C-C) scorpion toxin superfamily. Sodium channel inhibitor family. Beta subfamily. In terms of tissue distribution, expressed by the venom gland.

The protein resides in the secreted. In terms of biological role, beta toxins bind voltage-independently at site-4 of sodium channels (Nav) and shift the voltage of activation toward more negative potentials thereby affecting sodium channel activation and promoting spontaneous and repetitive firing. This is Toxin CngtIV from Centruroides noxius (Mexican scorpion).